We begin with the raw amino-acid sequence, 263 residues long: Eukaryotic translation initiation factor 3 subunit J-B (263 aa).

Composition is skewed to acidic residues over residues 1–13 (MADS…DNFE) and 30–50 (EGED…EEKE). Disordered regions lie at residues 1-75 (MADS…DKIK) and 214-235 (KQKQ…VPGG). A coiled-coil region spans residues 30 to 127 (EGEDEEEDVK…EADMELAREA (98 aa)). The span at 51 to 75 (EEKKVEQKIAEVKPPEKKKLSDKIK) shows a compositional bias: basic and acidic residues.

The protein belongs to the eIF-3 subunit J family. Component of the eukaryotic translation initiation factor 3 (eIF-3) complex, which is composed of 13 subunits: eif3a, eif3b, eif3c, eif3d, eif3e, eif3f, eif3g, eif3h, eif3i, eif3j, eif3k, eif3l and eif3m.

It is found in the cytoplasm. Functionally, component of the eukaryotic translation initiation factor 3 (eIF-3) complex, which is involved in protein synthesis of a specialized repertoire of mRNAs and, together with other initiation factors, stimulates binding of mRNA and methionyl-tRNAi to the 40S ribosome. The eIF-3 complex specifically targets and initiates translation of a subset of mRNAs involved in cell proliferation. The sequence is that of Eukaryotic translation initiation factor 3 subunit J-B (eif3jb) from Danio rerio (Zebrafish).